Reading from the N-terminus, the 229-residue chain is Potassium/proton antiporter CemA (229 aa).

3 helical membrane-spanning segments follow: residues 6–26, 107–127, and 189–209; these read AFIP…ISLC, ILHF…SFWG, and ILSG…KYWI.

It belongs to the CemA family.

The protein resides in the plastid. It is found in the chloroplast inner membrane. The catalysed reaction is K(+)(in) + H(+)(out) = K(+)(out) + H(+)(in). Functionally, contributes to K(+)/H(+) antiport activity by supporting proton efflux to control proton extrusion and homeostasis in chloroplasts in a light-dependent manner to modulate photosynthesis. Prevents excessive induction of non-photochemical quenching (NPQ) under continuous-light conditions. Indirectly promotes efficient inorganic carbon uptake into chloroplasts. The sequence is that of Potassium/proton antiporter CemA from Draba nemorosa (Woodland whitlowgrass).